A 962-amino-acid polypeptide reads, in one-letter code: Exportin-T (962 aa).

Methionine 1 bears the N-acetylmethionine mark. The tract at residues 1 to 385 (MDEQALLGLN…MLAVMKKLTY (385 aa)) is necessary for interaction with Ran, nuclear localization and nuclear import. Positions 443–962 (FMEVEVAIRL…LKVFFQRAKP (520 aa)) are necessary for tRNA-binding, cytoplasmic localization and nuclear export. Lysine 634 carries the post-translational modification N6-acetyllysine.

Belongs to the exportin family. Found in a complex with XPOT, Ran and tRNA. Probably found in a complex with nucleoporins. Interacts with Ran and tRNA in a GTP-dependent manner.

The protein localises to the nucleus. It is found in the cytoplasm. Mediates the nuclear export of aminoacylated tRNAs. In the nucleus binds to tRNA and to the GTPase Ran in its active GTP-bound form. Docking of this trimeric complex to the nuclear pore complex (NPC) is mediated through binding to nucleoporins. Upon transit of a nuclear export complex into the cytoplasm, disassembling of the complex and hydrolysis of Ran-GTP to Ran-GDP (induced by RANBP1 and RANGAP1, respectively) cause release of the tRNA from the export receptor. XPOT then return to the nuclear compartment and mediate another round of transport. The directionality of nuclear export is thought to be conferred by an asymmetric distribution of the GTP- and GDP-bound forms of Ran between the cytoplasm and nucleus. This Homo sapiens (Human) protein is Exportin-T (XPOT).